Consider the following 377-residue polypeptide: GTP 3',8-cyclase (377 aa).

Residues 1–29 are disordered; sequence MTTRLYLSPTPPRNDREGASKSTSASIKH. The region spanning 45–271 is the Radical SAM core domain; it reads RFGRIARDLR…FTLSPAKEPR (227 aa). Arginine 54 provides a ligand contact to GTP. Residues cysteine 61 and cysteine 65 each coordinate [4Fe-4S] cluster. Tyrosine 67 is a binding site for S-adenosyl-L-methionine. Cysteine 68 is a binding site for [4Fe-4S] cluster. Arginine 105 is a binding site for GTP. Glycine 109 is a binding site for S-adenosyl-L-methionine. Threonine 140 serves as a coordination point for GTP. Position 164 (serine 164) interacts with S-adenosyl-L-methionine. Residue lysine 201 coordinates GTP. Methionine 235 contacts S-adenosyl-L-methionine. 2 residues coordinate [4Fe-4S] cluster: cysteine 304 and cysteine 307. 309-311 serves as a coordination point for GTP; sequence RSR. Residue cysteine 321 participates in [4Fe-4S] cluster binding.

This sequence belongs to the radical SAM superfamily. MoaA family. Monomer and homodimer. It depends on [4Fe-4S] cluster as a cofactor.

The catalysed reaction is GTP + AH2 + S-adenosyl-L-methionine = (8S)-3',8-cyclo-7,8-dihydroguanosine 5'-triphosphate + 5'-deoxyadenosine + L-methionine + A + H(+). The protein operates within cofactor biosynthesis; molybdopterin biosynthesis. Catalyzes the cyclization of GTP to (8S)-3',8-cyclo-7,8-dihydroguanosine 5'-triphosphate. This is GTP 3',8-cyclase from Corynebacterium glutamicum (strain R).